Consider the following 534-residue polypeptide: CTP synthase (534 aa).

Positions 1 to 266 (MKTKFIFVTG…DEQVVEKLNI (266 aa)) are amidoligase domain. Position 14 (Ser-14) interacts with CTP. Ser-14 is a UTP binding site. ATP is bound by residues 15-20 (SIGKGL) and Asp-72. Residues Asp-72 and Glu-140 each contribute to the Mg(2+) site. Residues 147 to 149 (DIE), 187 to 192 (KTKPTQ), and Lys-223 contribute to the CTP site. Residues 187 to 192 (KTKPTQ) and Lys-223 each bind UTP. The Glutamine amidotransferase type-1 domain maps to 292-534 (RIAIVGKYVN…IAAALHNIKA (243 aa)). An L-glutamine-binding site is contributed by Gly-354. Cys-381 (nucleophile; for glutamine hydrolysis) is an active-site residue. L-glutamine-binding positions include 382 to 385 (LGMQ), Glu-405, and Arg-462. Catalysis depends on residues His-507 and Glu-509.

Belongs to the CTP synthase family. Homotetramer.

The enzyme catalyses UTP + L-glutamine + ATP + H2O = CTP + L-glutamate + ADP + phosphate + 2 H(+). It catalyses the reaction L-glutamine + H2O = L-glutamate + NH4(+). It carries out the reaction UTP + NH4(+) + ATP = CTP + ADP + phosphate + 2 H(+). Its pathway is pyrimidine metabolism; CTP biosynthesis via de novo pathway; CTP from UDP: step 2/2. With respect to regulation, allosterically activated by GTP, when glutamine is the substrate; GTP has no effect on the reaction when ammonia is the substrate. The allosteric effector GTP functions by stabilizing the protein conformation that binds the tetrahedral intermediate(s) formed during glutamine hydrolysis. Inhibited by the product CTP, via allosteric rather than competitive inhibition. Catalyzes the ATP-dependent amination of UTP to CTP with either L-glutamine or ammonia as the source of nitrogen. Regulates intracellular CTP levels through interactions with the four ribonucleotide triphosphates. The protein is CTP synthase of Geotalea uraniireducens (strain Rf4) (Geobacter uraniireducens).